A 252-amino-acid polypeptide reads, in one-letter code: MRKKFVAGNWKMNKDLLGAVSLATEILQLLGDEAPTCEVAIAPTFLCQQAVFQVIDESAIKLAAQNCFYEDQGAYTGEISAAMLRNSGCEYVILGHSERRQYFNETDEIVNKKVKNALSVELDVIMCVGETLEQRESGVTKSVVETQVRGGLKDLTAEDMKSVVIAYEPVWAIGTGKTATPEQAQEVHAFIRGIVKDMFGEEVANELRIQYGGSVKTSNAKELFGMPDIDGGLIGGASLNAEDFVEIIKSAE.

Residue 9 to 11 (NWK) coordinates substrate. His96 (electrophile) is an active-site residue. The active-site Proton acceptor is the Glu168. Substrate-binding positions include Gly174, Ser214, and 235-236 (GG).

The protein belongs to the triosephosphate isomerase family. As to quaternary structure, homodimer.

The protein resides in the cytoplasm. It carries out the reaction D-glyceraldehyde 3-phosphate = dihydroxyacetone phosphate. The protein operates within carbohydrate biosynthesis; gluconeogenesis. It functions in the pathway carbohydrate degradation; glycolysis; D-glyceraldehyde 3-phosphate from glycerone phosphate: step 1/1. Involved in the gluconeogenesis. Catalyzes stereospecifically the conversion of dihydroxyacetone phosphate (DHAP) to D-glyceraldehyde-3-phosphate (G3P). The polypeptide is Triosephosphate isomerase (Chloroherpeton thalassium (strain ATCC 35110 / GB-78)).